The following is a 167-amino-acid chain: Large ribosomal subunit protein uL10 (167 aa).

The protein belongs to the universal ribosomal protein uL10 family. Part of the ribosomal stalk of the 50S ribosomal subunit. The N-terminus interacts with L11 and the large rRNA to form the base of the stalk. The C-terminus forms an elongated spine to which L12 dimers bind in a sequential fashion forming a multimeric L10(L12)X complex.

Forms part of the ribosomal stalk, playing a central role in the interaction of the ribosome with GTP-bound translation factors. This is Large ribosomal subunit protein uL10 from Streptococcus mutans serotype c (strain ATCC 700610 / UA159).